Here is a 162-residue protein sequence, read N- to C-terminus: ATP synthase subunit delta, mitochondrial (162 aa).

The transit peptide at 1 to 24 directs the protein to the mitochondrion; that stretch reads MFSVARTAIRGAARPAVRIARRGY.

As to quaternary structure, F-type ATP synthases have 2 components, the catalytic core F(1) and the membrane-embedded component F(0), linked together by a central stalk and a peripheral stalk. The central stalk, also called rotor shaft, is often seen as part of F(1). The peripheral stalk is seen as part of F(0). F(0) contains the membrane channel next to the rotor. F-type ATP synthases form dimers but each monomer functions independently in ATP generation. The dimer consists of 17 different polypeptides: ATP1 (subunit alpha, 3 molecules per monomer, part of F(1)), ATP2 (subunit beta, 3 copies per monomer, part of F(1)), ATP3 (subunit gamma, part of the central stalk), ATP4 (subunit b, part of the peripheral stalk), ATP5/OSCP (subunit 5/OSCP, part of the peripheral stalk), ATP6 (subunit a, part of the peripheral stalk), ATP7 (subunit d, part of the peripheral stalk), ATP8 (subunit 8, part of the peripheral stalk), OLI1 (subunit c, part of the rotor, 10 molecules per monomer), ATP14 (subunit h, part of the peripheral stalk), ATP15 (subunit epsilon, part of the central stalk), ATP16 (subunit delta, part of the central stalk), ATP17 (subunit f, part of the peripheral stalk), ATP18 (subunit i/j, part of the peripheral stalk), ATP19 (subunit k, dimer-specific, at interface between monomers), ATP20 (subunit g, at interface between monomers), TIM11 (subunit e, at interface between monomers).

The protein resides in the mitochondrion inner membrane. Its function is as follows. Mitochondrial membrane ATP synthase (F(1)F(0) ATP synthase or Complex V) produces ATP from ADP in the presence of a proton gradient across the membrane which is generated by electron transport complexes of the respiratory chain. F-type ATP synthases consist of two structural domains, F(1) - containing the extramembraneous catalytic core, and F(0) - containing the membrane proton channel, linked together by a central stalk and a peripheral stalk. During catalysis, ATP synthesis in the catalytic domain of F(1) is coupled via a rotary mechanism of the central stalk subunits to proton translocation. Part of the complex F(1) domain and the central stalk which is part of the complex rotary element. Rotation of the central stalk against the surrounding alpha/ATP1(3)beta/ATP2(3) subunits leads to hydrolysis of ATP in three separate catalytic sites on the beta/ATP2 subunits. This Yarrowia lipolytica (strain CLIB 122 / E 150) (Yeast) protein is ATP synthase subunit delta, mitochondrial.